A 263-amino-acid chain; its full sequence is N-acyl homoserine lactonase AttM (263 aa).

Histidine 103, histidine 105, aspartate 107, histidine 108, histidine 180, aspartate 202, and histidine 247 together coordinate Zn(2+).

It belongs to the metallo-beta-lactamase superfamily. The cofactor is Zn(2+).

It catalyses the reaction an N-acyl-L-homoserine lactone + H2O = an N-acyl-L-homoserine + H(+). This Agrobacterium fabrum (strain C58 / ATCC 33970) (Agrobacterium tumefaciens (strain C58)) protein is N-acyl homoserine lactonase AttM.